The sequence spans 64 residues: Small ribosomal subunit protein eS17 (64 aa).

This sequence belongs to the eukaryotic ribosomal protein eS17 family.

In Natronomonas pharaonis (strain ATCC 35678 / DSM 2160 / CIP 103997 / JCM 8858 / NBRC 14720 / NCIMB 2260 / Gabara) (Halobacterium pharaonis), this protein is Small ribosomal subunit protein eS17.